Consider the following 152-residue polypeptide: Acidic phospholipase A2 homolog textilotoxin D chain (152 aa).

Positions 1 to 19 (MHPAHLLVLLGVCVSLLGA) are cleaved as a signal peptide. Cystine bridges form between Cys-38-Cys-104, Cys-54-Cys-151, Cys-56-Cys-72, Cys-71-Cys-132, Cys-78-Cys-125, Cys-88-Cys-118, and Cys-111-Cys-123. Asn-112 carries an N-linked (GlcNAc...) asparagine glycan.

The protein belongs to the phospholipase A2 family. Group I subfamily. D49 sub-subfamily. In terms of assembly, heterohexamer. 2 forms exist: 2 A or 2 B chains, 2 C chains and 2 covalently-linked D chains, and 1 A or 1 B, 1 C, 2 covalently-linked D chains and 2 differentially glycosylated covalently-linked D chains. Textilotoxin was originally described as pentameric. As to expression, expressed by the venom gland.

The protein resides in the secreted. Functionally, snake venom oligomeric phospholipase A2 that has potent presynaptic neurotoxicity. Chain D is not itself neurotoxic, but it is essential for the neurotoxicity of textilotoxin. Chain D possesses a very low phospholipase activity. The protein is Acidic phospholipase A2 homolog textilotoxin D chain of Pseudonaja textilis (Eastern brown snake).